The primary structure comprises 237 residues: Large ribosomal subunit protein uL2 (237 aa).

The disordered stretch occupies residues 202–237 (FGGGNRKHPGKPTTVSRNAPPGRKVGHIAARRTGKR). Positions 225 to 237 (KVGHIAARRTGKR) are enriched in basic residues.

It belongs to the universal ribosomal protein uL2 family. As to quaternary structure, part of the 50S ribosomal subunit. Forms a bridge to the 30S subunit in the 70S ribosome.

Functionally, one of the primary rRNA binding proteins. Required for association of the 30S and 50S subunits to form the 70S ribosome, for tRNA binding and peptide bond formation. It has been suggested to have peptidyltransferase activity; this is somewhat controversial. Makes several contacts with the 16S rRNA in the 70S ribosome. This Methanococcoides burtonii (strain DSM 6242 / NBRC 107633 / OCM 468 / ACE-M) protein is Large ribosomal subunit protein uL2.